Reading from the N-terminus, the 167-residue chain is Transmembrane protein 229B (167 aa).

The Cytoplasmic portion of the chain corresponds to 1-14; that stretch reads MASAEPLTALSRWY. Residues 15–35 traverse the membrane as a helical segment; that stretch reads LYAIHGYFCEVMFTAAWEFVV. Residues 36–40 lie on the Extracellular side of the membrane; that stretch reads NFNWK. Residues 41–61 form a helical membrane-spanning segment; sequence FPGVTSVWALFIYGTSILIVE. At 62 to 73 the chain is on the cytoplasmic side; sequence RMYLRLRGRCPL. The helical transmembrane segment at 74–94 threads the bilayer; the sequence is LVRCVIYTLWTYLWEFTTGFI. Topologically, residues 95 to 109 are extracellular; that stretch reads LRQFNACPWDYSQFD. Residues 110 to 130 traverse the membrane as a helical segment; it reads FDFMGLITLEYAVPWFCGALI. Over 131-167 the chain is Cytoplasmic; it reads MEQFIIRNTLRLRFDKDAEPGEPASPPALANGHVKTD. Residues 148–167 are disordered; the sequence is AEPGEPASPPALANGHVKTD.

It belongs to the TMEM229 family.

The protein resides in the membrane. The chain is Transmembrane protein 229B (TMEM229B) from Mus musculus (Mouse).